We begin with the raw amino-acid sequence, 427 residues long: Adenylosuccinate synthetase (427 aa).

Residues 12–18 (GDEGKGK) and 40–42 (GHT) each bind GTP. Asp-13 acts as the Proton acceptor in catalysis. Asp-13 and Gly-40 together coordinate Mg(2+). Residues 13–16 (DEGK), 38–41 (NAGH), Thr-128, Arg-142, Gln-223, Thr-238, and Arg-302 contribute to the IMP site. His-41 (proton donor) is an active-site residue. 298 to 304 (TTTGRPR) contacts substrate. GTP-binding positions include Arg-304, 330–332 (SID), and 412–414 (SVG).

This sequence belongs to the adenylosuccinate synthetase family. Homodimer. Mg(2+) is required as a cofactor.

The protein resides in the cytoplasm. It catalyses the reaction IMP + L-aspartate + GTP = N(6)-(1,2-dicarboxyethyl)-AMP + GDP + phosphate + 2 H(+). The protein operates within purine metabolism; AMP biosynthesis via de novo pathway; AMP from IMP: step 1/2. Plays an important role in the de novo pathway of purine nucleotide biosynthesis. Catalyzes the first committed step in the biosynthesis of AMP from IMP. This is Adenylosuccinate synthetase from Staphylococcus aureus (strain N315).